A 73-amino-acid polypeptide reads, in one-letter code: Translation initiation factor IF-1 2 (73 aa).

One can recognise an S1-like domain in the interval 1-72 (MAKEELVEFG…TKGRINYRHK (72 aa)).

Belongs to the IF-1 family. Component of the 30S ribosomal translation pre-initiation complex which assembles on the 30S ribosome in the order IF-2 and IF-3, IF-1 and N-formylmethionyl-tRNA(fMet); mRNA recruitment can occur at any time during PIC assembly.

It localises to the cytoplasm. Functionally, one of the essential components for the initiation of protein synthesis. Stabilizes the binding of IF-2 and IF-3 on the 30S subunit to which N-formylmethionyl-tRNA(fMet) subsequently binds. Helps modulate mRNA selection, yielding the 30S pre-initiation complex (PIC). Upon addition of the 50S ribosomal subunit IF-1, IF-2 and IF-3 are released leaving the mature 70S translation initiation complex. The sequence is that of Translation initiation factor IF-1 2 from Cupriavidus pinatubonensis (strain JMP 134 / LMG 1197) (Cupriavidus necator (strain JMP 134)).